A 533-amino-acid polypeptide reads, in one-letter code: Probable bifunctional tRNA threonylcarbamoyladenosine biosynthesis protein (533 aa).

The tract at residues 1 to 329 is kae1; the sequence is MTRVLGIEGT…FRPDEVPVSW (329 aa). 2 residues coordinate Fe cation: His-113 and His-117. Residues 134-138, Asp-166, Gly-179, Glu-183, and Asn-262 contribute to the L-threonylcarbamoyladenylate site; that span reads NASGA. Asp-290 serves as a coordination point for Fe cation. In terms of domain architecture, Protein kinase spans 338–533; the sequence is PVPTDERRQG…REIETRGRYQ (196 aa). ATP-binding positions include 345–352 and Lys-363; that span reads RQGAEAVV. The active-site Proton acceptor; for kinase activity is Asp-452.

This sequence in the N-terminal section; belongs to the KAE1 / TsaD family. In the C-terminal section; belongs to the protein kinase superfamily. Tyr protein kinase family. BUD32 subfamily. In terms of assembly, component of the KEOPS complex that consists of Kae1, Bud32, Cgi121 and Pcc1; the whole complex dimerizes. Fe(2+) is required as a cofactor.

It is found in the cytoplasm. The catalysed reaction is L-seryl-[protein] + ATP = O-phospho-L-seryl-[protein] + ADP + H(+). It catalyses the reaction L-threonyl-[protein] + ATP = O-phospho-L-threonyl-[protein] + ADP + H(+). The enzyme catalyses L-threonylcarbamoyladenylate + adenosine(37) in tRNA = N(6)-L-threonylcarbamoyladenosine(37) in tRNA + AMP + H(+). Required for the formation of a threonylcarbamoyl group on adenosine at position 37 (t(6)A37) in tRNAs that read codons beginning with adenine. Is a component of the KEOPS complex that is probably involved in the transfer of the threonylcarbamoyl moiety of threonylcarbamoyl-AMP (TC-AMP) to the N6 group of A37. The Kae1 domain likely plays a direct catalytic role in this reaction. The Bud32 domain probably displays kinase activity that regulates Kae1 function. This is Probable bifunctional tRNA threonylcarbamoyladenosine biosynthesis protein from Natronomonas pharaonis (strain ATCC 35678 / DSM 2160 / CIP 103997 / JCM 8858 / NBRC 14720 / NCIMB 2260 / Gabara) (Halobacterium pharaonis).